Reading from the N-terminus, the 301-residue chain is Tetratricopeptide repeat domain-containing protein PYG7, chloroplastic (301 aa).

A chloroplast-targeting transit peptide spans 1 to 61; that stretch reads MFESNMVLQT…FHDYVFAEIS (61 aa). A run of 2 helical transmembrane segments spans residues 82-102 and 121-141; these read TFLL…AAAA and IQLS…FYVI. TPR repeat units follow at residues 168–201, 206–239, and 240–273; these read ATEL…WDGD, AQVY…QPGY, and VTAW…DPNN.

As to quaternary structure, interacts with PSA3.

It is found in the plastid. Its subcellular location is the chloroplast thylakoid membrane. Nuclear genome-encoded factor required for the accumulation of photosystem I (PSI). Functions as a PSI biogenesis factor. Cooperates with PSA3 to promote the stable assembly of PSI in the thylakoid membrane. May target primarily the PsaC subunit. In Arabidopsis thaliana (Mouse-ear cress), this protein is Tetratricopeptide repeat domain-containing protein PYG7, chloroplastic.